The following is a 625-amino-acid chain: FMRFamide-activated amiloride-sensitive sodium channel (625 aa).

The Cytoplasmic portion of the chain corresponds to 1–67 (MKYTSAATKP…IVTSRDTKRK (67 aa)). The helical transmembrane segment at 68-89 (VIWALLVIAGFTAATLQLSLLV) threads the bilayer. Residues 90 to 536 (RKYLQFQVVE…LADLFADIGG (447 aa)) lie on the Extracellular side of the membrane. N-linked (GlcNAc...) asparagine glycans are attached at residues N134, N196, N303, N349, N365, N372, and N473. A helical transmembrane segment spans residues 537-557 (TLGLWMGISVLTIMELIELVI). Topologically, residues 558–625 (RLTGLVFNSE…DFRRGVESPV (68 aa)) are cytoplasmic. The segment at 570 to 591 (LPRGPTTVNNNNGSNNHSQSTS) is disordered. Residues 575 to 591 (TTVNNNNGSNNHSQSTS) are compositionally biased toward low complexity.

The protein belongs to the amiloride-sensitive sodium channel (TC 1.A.6) family. As to expression, muscle and nervous tissue.

It is found in the membrane. Its function is as follows. FMRFamide-gated ionotropic receptor. The polypeptide is FMRFamide-activated amiloride-sensitive sodium channel (Cornu aspersum (Brown garden snail)).